Reading from the N-terminus, the 415-residue chain is Actin-like protein 7B (415 aa).

Residues 1-31 (MATRNSPMPLGTAQGDPGEAGTRPGPDASLR) are disordered. Position 6 is a phosphoserine (serine 6).

The protein belongs to the actin family. As to expression, detected only in the testis and, to a lesser extent, in the prostate.

Its subcellular location is the cytoplasm. The protein localises to the cytoskeleton. This is Actin-like protein 7B (ACTL7B) from Homo sapiens (Human).